We begin with the raw amino-acid sequence, 311 residues long: Thioredoxin reductase (311 aa).

FAD contacts are provided by residues 15 to 18 (SGPA), 37 to 44 (EGTQFGGA), asparagine 53, and valine 86. Cysteine 137 and cysteine 140 are oxidised to a cystine. NADP(+) is bound by residues serine 158, histidine 177, arginine 183, isoleucine 240, and tyrosine 260. FAD is bound by residues aspartate 280 and 287–290 (RQAI). Arginine 287 is a binding site for NADP(+).

This sequence belongs to the class-II pyridine nucleotide-disulfide oxidoreductase family. As to quaternary structure, homodimer. It depends on FAD as a cofactor.

The protein resides in the cytoplasm. It carries out the reaction [thioredoxin]-dithiol + NADP(+) = [thioredoxin]-disulfide + NADPH + H(+). This is Thioredoxin reductase from Mycolicibacterium smegmatis (Mycobacterium smegmatis).